A 1939-amino-acid chain; its full sequence is Myosin-4 (1939 aa).

A Myosin N-terminal SH3-like domain is found at 33 to 82 (DAKSSVFVVDAKESYVKATVQSREGGKVTAKTEGGATVTVKEDQVFSMNP). S36 bears the Phosphoserine mark. Phosphothreonine occurs at positions 64 and 69. S79 is modified (phosphoserine). Positions 86–782 (DKIEDMAMMT…LLGTLEEMRD (697 aa)) constitute a Myosin motor domain. K130 carries the post-translational modification N6,N6,N6-trimethyllysine. 179-186 (GESGAGKT) lines the ATP pocket. Y389 is subject to Phosphotyrosine. A Phosphothreonine modification is found at T391. At S392 the chain carries Phosphoserine. Residue T419 is modified to Phosphothreonine. Position 424 is a phosphotyrosine (Y424). Residue S625 is modified to Phosphoserine. An actin-binding region spans residues 659–681 (LNKLMTNLKSTHPHFVRCLIPNE). H757 carries the pros-methylhistidine modification. The interval 761–775 (KFGHTKVFFKAGLLG) is actin-binding. A Phosphothreonine modification is found at T776. The IQ domain occupies 785–814 (LAQLITRTQAVCRGYLMRVEFRKMMERRES). A coiled-coil region spans residues 843–1939 (LLKSAETEKE…EVHTKVISEE (1097 aa)). Residues S1092 and S1096 each carry the phosphoserine modification. Disordered regions lie at residues 1128-1147 (AERA…SREL) and 1153-1172 (RLEE…KKRE). Residues S1162 and S1237 each carry the phosphoserine modification. T1241 carries the phosphothreonine modification. Residue S1243 is modified to Phosphoserine. At T1255 the chain carries Phosphothreonine. The residue at position 1261 (S1261) is a Phosphoserine. A Phosphothreonine modification is found at T1265. Phosphoserine is present on S1278. Residue T1286 is modified to Phosphothreonine. A phosphoserine mark is found at S1288, S1292, S1303, S1306, and S1413. Y1464 carries the phosphotyrosine modification. T1467 bears the Phosphothreonine mark. Position 1474 is a phosphoserine (S1474). Y1492 is subject to Phosphotyrosine. At S1495 the chain carries Phosphoserine. T1501 carries the post-translational modification Phosphothreonine. Residue S1514 is modified to Phosphoserine. T1517 is modified (phosphothreonine). Phosphoserine occurs at positions 1542, 1547, 1554, 1574, 1600, 1603, 1714, and 1726. T1730 and T1736 each carry phosphothreonine. Residue S1739 is modified to Phosphoserine.

It belongs to the TRAFAC class myosin-kinesin ATPase superfamily. Myosin family. Muscle myosin is a hexameric protein that consists of 2 heavy chain subunits (MHC), 2 alkali light chain subunits (MLC) and 2 regulatory light chain subunits (MLC-2).

It is found in the cytoplasm. It localises to the myofibril. Its function is as follows. Muscle contraction. In Rattus norvegicus (Rat), this protein is Myosin-4.